The primary structure comprises 208 residues: Protein-L-isoaspartate O-methyltransferase (208 aa).

The active site involves S59.

Belongs to the methyltransferase superfamily. L-isoaspartyl/D-aspartyl protein methyltransferase family.

Its subcellular location is the cytoplasm. The catalysed reaction is [protein]-L-isoaspartate + S-adenosyl-L-methionine = [protein]-L-isoaspartate alpha-methyl ester + S-adenosyl-L-homocysteine. In terms of biological role, catalyzes the methyl esterification of L-isoaspartyl residues in peptides and proteins that result from spontaneous decomposition of normal L-aspartyl and L-asparaginyl residues. It plays a role in the repair and/or degradation of damaged proteins. The sequence is that of Protein-L-isoaspartate O-methyltransferase from Cronobacter sakazakii (strain ATCC BAA-894) (Enterobacter sakazakii).